The sequence spans 534 residues: DM7 family protein GE17491 (534 aa).

Belongs to the DM7 family.

In Drosophila yakuba (Fruit fly), this protein is DM7 family protein GE17491.